A 398-amino-acid polypeptide reads, in one-letter code: Acetate kinase (398 aa).

Asparagine 9 lines the Mg(2+) pocket. Lysine 16 is a binding site for ATP. Arginine 93 provides a ligand contact to substrate. Catalysis depends on aspartate 150, which acts as the Proton donor/acceptor. ATP is bound by residues histidine 209–glycine 213, aspartate 284–arginine 286, and glycine 329–histidine 333. Glutamate 382 contacts Mg(2+).

This sequence belongs to the acetokinase family. In terms of assembly, homodimer. Requires Mg(2+) as cofactor. The cofactor is Mn(2+).

Its subcellular location is the cytoplasm. It carries out the reaction acetate + ATP = acetyl phosphate + ADP. It participates in metabolic intermediate biosynthesis; acetyl-CoA biosynthesis; acetyl-CoA from acetate: step 1/2. Its function is as follows. Catalyzes the formation of acetyl phosphate from acetate and ATP. Can also catalyze the reverse reaction. In Rhodopseudomonas palustris (strain TIE-1), this protein is Acetate kinase.